The chain runs to 244 residues: Sortase B (244 aa).

At 1–6 the chain is on the cytoplasmic side; the sequence is MRMKRF. The helical transmembrane segment at 7–24 threads the bilayer; that stretch reads LTIVQILLVVIIIIFGYK. The Extracellular portion of the chain corresponds to 25–244; the sequence is IVQTYIEDKQ…VVVAKIIKVS (220 aa). The Acyl-thioester intermediate role is filled by Cys-223.

It belongs to the bacterial sortase family. Class B subfamily.

The protein resides in the cell membrane. The catalysed reaction is The enzyme catalyzes a cell wall sorting reaction in which a surface protein with a sorting signal containing a NPXTN motif is cleaved between the Thr and Asn residue. The resulting threonine carboxyl end of the protein is covalently attached to a pentaglycine cross-bridge of peptidoglycan.. Its activity is regulated as follows. Inhibited by MTSET (2-(Trimethylammonium)-ethyl-methanethiosulfonate) and E64 ([n- (l-3-trans-carboxyoxirane-2-carbonyl)-l-leucyl]-amido(4-guanido)butane). Inhibited by coptisine. Functionally, transpeptidase that anchors surface proteins to the cell wall. Recognizes and modifies its substrate by proteolytic cleavage of a C-terminal sorting signal. Following cleavage, a covalent intermediate is formed via a thioester bond between the sortase and its substrate, which is then transferred and covalently attached to the cell wall. This sortase recognizes an Asn-Pro-Gln-Thr-Asn (NPQTN) motif in IsdC, which is cleaved by the sortase between the threonine and aspargine residues; may only have 1 substrate in this bacterium. May be dedicated to the process of iron acquisition during bacterial infection. The chain is Sortase B from Staphylococcus aureus (strain NCTC 8325 / PS 47).